The following is a 318-amino-acid chain: MRSIWKGSIAFGLVNVPVKVYSATEDHDIKFHQVHAKDNGRIRYKRVCEVCGEVVEYRDINKAFESDDGQMVVITDEDIATLPEERSREIEVVEFIPAEQLDPLMYDKSYFLEPDSKSSKSYVLLAKTLAETDRIAIVHFSLRNKSRLAALRVKDFSKRDVMMIHTLLWPDEIRDPDFPILDKEVQIKPAELKMAGQVVESMTDDFKPDLYHDDYQEQLRELVQAKLEGGEAFSVEEQPAELDEGTEDVSDLLAKLEASVKARKGGKSDSKDDSDSESDSKESKSDSKPAKKAPAKKAAAKKSTAKKAPAKKAAAKKS.

The Ku domain occupies 10-193 (AFGLVNVPVK…EVQIKPAELK (184 aa)). Positions 259–318 (SVKARKGGKSDSKDDSDSESDSKESKSDSKPAKKAPAKKAAAKKSTAKKAPAKKAAAKKS) are disordered. Over residues 266–289 (GKSDSKDDSDSESDSKESKSDSKP) the composition is skewed to basic and acidic residues. A compositionally biased stretch (basic residues) spans 290-318 (AKKAPAKKAAAKKSTAKKAPAKKAAAKKS).

Belongs to the prokaryotic Ku family. In terms of assembly, homodimer. Interacts with Sir2 and probably also with LigD; may form a trimeric complex during NHEJ.

Functionally, with LigD forms a non-homologous end joining (NHEJ) repair enzyme which repairs blunt-end and 5'-overhang double strand breaks (DSB) with about 50% fidelity, and DSB with non-complementary 3' ends. Plays a partial role in NHEJ on 3'-overhang repair of complementary ends. NHEJ repairs DSB with blunt ends and 5' overhangs with a high level of nucleotide insertion/deletion, without a need for microhomology. This protein but not LigD also suppresses homologous recombination. Overexpression dramatically increases the efficiency of NHEJ with no effect on repair fidelity. The polypeptide is Non-homologous end joining protein Ku (Mycolicibacterium smegmatis (strain ATCC 700084 / mc(2)155) (Mycobacterium smegmatis)).